The chain runs to 222 residues: Orotate phosphoribosyltransferase (222 aa).

Residue Lys29 coordinates 5-phospho-alpha-D-ribose 1-diphosphate. Orotate is bound at residue 37 to 38; the sequence is FF. 5-phospho-alpha-D-ribose 1-diphosphate contacts are provided by residues 75 to 76, Arg101, Lys102, Lys105, His107, and 126 to 134; these read YK and DDVISAGTS. Orotate-binding residues include Ser130 and Arg158.

It belongs to the purine/pyrimidine phosphoribosyltransferase family. PyrE subfamily. As to quaternary structure, homodimer. The cofactor is Mg(2+).

The enzyme catalyses orotidine 5'-phosphate + diphosphate = orotate + 5-phospho-alpha-D-ribose 1-diphosphate. The protein operates within pyrimidine metabolism; UMP biosynthesis via de novo pathway; UMP from orotate: step 1/2. Its function is as follows. Catalyzes the transfer of a ribosyl phosphate group from 5-phosphoribose 1-diphosphate to orotate, leading to the formation of orotidine monophosphate (OMP). This is Orotate phosphoribosyltransferase from Polynucleobacter asymbioticus (strain DSM 18221 / CIP 109841 / QLW-P1DMWA-1) (Polynucleobacter necessarius subsp. asymbioticus).